A 132-amino-acid chain; its full sequence is Interleukin-13 (132 aa).

Positions Met-1 to Ala-18 are cleaved as a signal peptide. N-linked (GlcNAc...) asparagine glycans are attached at residues Asn-38, Asn-49, Asn-57, and Asn-72. Intrachain disulfides connect Cys-48–Cys-76 and Cys-64–Cys-90.

It belongs to the IL-4/IL-13 family. In terms of assembly, interacts with IL13RA2.

Its subcellular location is the secreted. Cytokine that plays important roles in allergic inflammation and immune response to parasite infection. Synergizes with IL2 in regulating interferon-gamma synthesis. Stimulates B-cell proliferation, and activation of eosinophils, basophils, and mast cells. Plays an important role in controlling IL33 activity by modulating the production of transmembrane and soluble forms of interleukin-1 receptor-like 1/IL1RL1. Displays the capacity to antagonize Th1-driven proinflammatory immune response and downregulates synthesis of many proinflammatory cytokines including IL1, IL6, IL10, IL12 and TNF-alpha through a mechanism that partially involves suppression of NF-kappa-B. Also functions on nonhematopoietic cells, including endothelial cells where it induces vascular cell adhesion protein 1/VCAM1, which is important in the recruitment of eosinophils. Exerts its biological effects through its receptors which comprises the IL4R chain and the IL13RA1 chain, to activate JAK1 and TYK2, leading to the activation of STAT6. Aside from IL13RA1, another receptor IL13RA2 acts as a high affinity decoy for IL13 and mediates internalization and depletion of extracellular IL13. In Macaca thibetana (Pere David's macaque), this protein is Interleukin-13 (IL13).